The chain runs to 86 residues: Small ribosomal subunit protein bS20 (86 aa).

Belongs to the bacterial ribosomal protein bS20 family.

In terms of biological role, binds directly to 16S ribosomal RNA. This Rhodococcus jostii (strain RHA1) protein is Small ribosomal subunit protein bS20.